Consider the following 220-residue polypeptide: MVDPLILGAVGAGLAVGIAGLGSGIGAGITGASGAGVVAEDPNKFGTAIVFQALPQTQGLYGFLVAILILFVFKTVSPWAMFAAGLAAGLAGLSAIGQGIAASAGLGAVAEDNSIFGKAMVFSVLPETQAIYGLLIAILLLVGVFKGNAGAETVAALGAGFAVGFAGLSGIGQGITAAGAIGATARDPDAMGKGLVLAVMPETFAIFGLLIAILIMLMIK.

The next 6 membrane-spanning stretches (helical) occupy residues 5–25 (LILGAVGAGLAVGIAGLGSGI), 63–83 (FLVAILILFVFKTVSPWAMFA), 90–110 (LAGLSAIGQGIAASAGLGAVA), 125–145 (LPETQAIYGLLIAILLLVGVF), 155–175 (AALGAGFAVGFAGLSGIGQGI), and 195–215 (LVLAVMPETFAIFGLLIAILI).

It belongs to the V-ATPase proteolipid subunit family. As to quaternary structure, the A-type ATPase is composed of subunits A(3), B(3), C, D, E(1 or 2), F, H(2), I and K(x). Subunit K dimerizes and may form higher oligomers.

It localises to the cell membrane. Its function is as follows. Component of the A-type ATP synthase that produces ATP from ADP in the presence of a proton gradient across the membrane. In Methanocaldococcus jannaschii (strain ATCC 43067 / DSM 2661 / JAL-1 / JCM 10045 / NBRC 100440) (Methanococcus jannaschii), this protein is A-type ATP synthase subunit K.